The following is a 1137-amino-acid chain: DENN domain-containing protein 2B (1137 aa).

A compositionally biased stretch (polar residues) spans 1–12; sequence MTMTANKNSSIT. The segment at 1–99 is disordered; it reads MTMTANKNSS…PTCPFKTASF (99 aa). 2 positions are modified to phosphoserine: Ser30 and Ser32. The segment covering 32–43 has biased composition (pro residues); sequence SPPPVLSPPRSP. A compositionally biased stretch (polar residues) spans 49 to 64; it reads DSETSACRYPSHSSSR. Residues 73 to 92 are compositionally biased toward pro residues; the sequence is PAPSPQNPQDPSPDTSPPTC. A Phosphothreonine modification is found at Thr231. Residue Ser233 is modified to Phosphoserine. The disordered stretch occupies residues 293-573; the sequence is KEQPGRGLPQ…HRLPRLPKRH (281 aa). Over residues 324–348 the composition is skewed to low complexity; it reads EEPAGGASVSAGSRAVGVAGVAGEA. The residue at position 364 (Thr364) is a Phosphothreonine. Phosphoserine is present on Ser368. Low complexity predominate over residues 368 to 380; sequence SPSSQRLPSKSSL. Positions 392-402 are enriched in basic and acidic residues; the sequence is RTFEYEADKNP. The tract at residues 401-447 is interaction with ABL1; that stretch reads NPKSKPSNGLPPSPTPAAPPPLPSTPAPPVTRRPKKDMRGHRKSQSR. The segment covering 409–431 has biased composition (pro residues); sequence GLPPSPTPAAPPPLPSTPAPPVT. The segment covering 432-446 has biased composition (basic residues); the sequence is RRPKKDMRGHRKSQS. A compositionally biased stretch (polar residues) spans 456-481; that stretch reads SSLQSLYPSSPTENGTENQPKFGSKS. At Thr482 the chain carries Phosphothreonine. Residues 495 to 508 are compositionally biased toward basic and acidic residues; the sequence is LPKENPYEDVDLKS. Composition is skewed to polar residues over residues 514 to 524 and 539 to 558; these read KSQQLSENSLD and SPPT…SGNW. A Phosphoserine modification is found at Ser545. Residues 562–573 show a composition bias toward basic residues; the sequence is KSHRLPRLPKRH. Phosphoserine occurs at positions 574 and 622. The interval 641-661 is disordered; it reads IETASLRDENSESESDSDDRF. The 149-residue stretch at 698–846 folds into the uDENN domain; sequence EYFVVVSLKK…PFPAPGKTIK (149 aa). One can recognise a cDENN domain in the interval 868-1001; the sequence is RLEHVDFECL…LQAALEQALE (134 aa). The 94-residue stretch at 1003–1096 folds into the dDENN domain; it reads KNELISQDSD…QDRELRKCRA (94 aa).

Interacts with ITSN1 and GRB2. Isoform 1 interacts with the SH3 domain of ABL1. Phosphorylated. Phosphorylation decreases ITSN1 binding. In terms of tissue distribution, widely expressed with the exception of peripheral blood lymphocytes. Isoform 1 is expressed in several epithelial and fibroblast (including tumorigenic) but absent in lymphoid cell lines (at protein level). Isoform 3 is expressed in primary cell or weakly tumorigenic but not in tumorigenic cell lines (at protein level).

It is found in the cytoplasm. The protein resides in the cell cortex. Its subcellular location is the cell membrane. It localises to the recycling endosome. May be involved in cytoskeletal organization and tumorogenicity. Seems to be involved in a signaling transduction pathway leading to activation of MAPK1/ERK2. Plays a role in EGFR trafficking from recycling endosomes back to the cell membrane. Its function is as follows. Guanine nucleotide exchange factor (GEF) which may activate RAB9A and RAB9B. Promotes the exchange of GDP to GTP, converting inactive GDP-bound Rab proteins into their active GTP-bound form. In terms of biological role, may block ERK2 activation stimulated by ABL1. May alter cell morphology and cell growth. This is DENN domain-containing protein 2B from Homo sapiens (Human).